We begin with the raw amino-acid sequence, 634 residues long: MDNAVDGLDKASIANSDGPTAGSQTPPFKRKGKLSTIGKIFKPWKWRKKKTSDKFRETSAVLERKISTRQSREELIRRGVLKELPDQDGDVTVNFENSNGHMIPIGEESTREENVVKSEEGNGSVSEKTPPLEEQAEDKKENTENHSETPAAPALPPSAPPKPRPKPKPKKSPVPPKGATAGASHKGDEVPPIKKNTKAPGKQAPVPPPKPASRNTTREAAGSSHSKKTTGSKASASPSTSSTSSRPKASKETVSSKAGTVGTTKGKRKTDKQPITSHLSSDTTTSGTSDLKGEPAETRVESFKLEQTVPGAEEQNTGKFKSMVPPPPVAPAPSPLAPPLPLEDQCITASDTPVVLVSVGADLPVSALDPSQLLWAEEPTNRTTLYSGTGLSVNRENAKCFTTKEELGKTVPQLLTPGLMGESSESFSASEDEGHREYQANDSDSDGPILYTDDEDEDEDEDGSGESALASKIRRRDTLAIKLGNRPSKKELEDKNILQRTSEEERQEIRQQIGTKLVRRLSQRPTTEELEQRNILKQKNEEEEQEAKMELKRRLSRKLSLRPTVAELQARRILRFNEYVEVTDSPDYDRRADKPWARLTPADKAAIRKELNEFKSTEMEVHEESRQFTRFHRP.

Disordered stretches follow at residues 1-32 (MDNA…KRKG), 84-344 (LPDQ…PLED), 412-471 (PQLL…ALAS), and 485-508 (NRPS…ERQE). Residue Asp-2 is the site of N-myristoyl glycine attachment. The segment covering 13 to 26 (IANSDGPTAGSQTP) has biased composition (polar residues). Phosphoserine is present on Ser-16. The residue at position 25 (Thr-25) is a Phosphothreonine. Residues 60 to 85 (AVLERKISTRQSREELIRRGVLKELP) form an RPEL 1 repeat. Basic and acidic residues-rich tracts occupy residues 108-120 (ESTR…KSEE) and 137-147 (EDKKENTENHS). Over residues 153–162 (PALPPSAPPK) the composition is skewed to pro residues. Composition is skewed to low complexity over residues 231–247 (GSKA…SSRP) and 276–290 (TSHL…GTSD). The segment covering 291-304 (LKGEPAETRVESFK) has biased composition (basic and acidic residues). Pro residues predominate over residues 324-341 (VPPPPVAPAPSPLAPPLP). Ser-423 carries the post-translational modification Phosphoserine. Positions 452 to 464 (TDDEDEDEDEDGS) are enriched in acidic residues. RPEL repeat units follow at residues 477–502 (DTLA…QRTS), 515–540 (TKLV…KQKN), and 553–578 (RRLS…RFNE). Basic and acidic residues predominate over residues 488 to 508 (SKKELEDKNILQRTSEEERQE). Ser-522 and Ser-560 each carry phosphoserine.

This sequence belongs to the phosphatase and actin regulator family. As to quaternary structure, binds PPP1CA and actin.

Its subcellular location is the membrane. The chain is Phosphatase and actin regulator 2 (PHACTR2) from Homo sapiens (Human).